The chain runs to 286 residues: Ribonuclease Z (286 aa).

Zn(2+)-binding residues include H61, H63, D65, H66, H153, D176, and H240. D65 (proton acceptor) is an active-site residue.

The protein belongs to the RNase Z family. In terms of assembly, homodimer. The cofactor is Zn(2+).

The catalysed reaction is Endonucleolytic cleavage of RNA, removing extra 3' nucleotides from tRNA precursor, generating 3' termini of tRNAs. A 3'-hydroxy group is left at the tRNA terminus and a 5'-phosphoryl group is left at the trailer molecule.. In terms of biological role, zinc phosphodiesterase, which displays some tRNA 3'-processing endonuclease activity. Probably involved in tRNA maturation, by removing a 3'-trailer from precursor tRNA. This chain is Ribonuclease Z, found in Mycolicibacterium gilvum (strain PYR-GCK) (Mycobacterium gilvum (strain PYR-GCK)).